The following is a 238-amino-acid chain: Ras association domain-containing protein 3 (238 aa).

Ser2 carries the N-acetylserine modification. The interval 26–48 (RAPQGKPRSGQQDVEKEKETHSY) is disordered. The span at 38 to 48 (DVEKEKETHSY) shows a compositional bias: basic and acidic residues. The Ras-associating domain occupies 79-186 (YTGFIKVQME…TLSFVLREHE (108 aa)). The SARAH domain maps to 187 to 234 (IGEWEAFSLPELQNFLRILDKEEDEQLQNLKRRYTAYRQKLEEALREV).

In terms of tissue distribution, widely expressed.

The protein localises to the cytoplasm. It is found in the cytoskeleton. This chain is Ras association domain-containing protein 3 (RASSF3), found in Homo sapiens (Human).